The following is a 117-amino-acid chain: MGSTAILALLLAVLQGVCAEVQLVQSGAEVKKPGESLRISCKGSGYSFTSYWISWVRQMPGKGLEWMGRIDPSDSYTNYSPSFQGHVTISADKSISTAYLQWSSLKASDTAMYYCAR.

A signal peptide spans 1–19 (MGSTAILALLLAVLQGVCA). Positions 20 to 44 (EVQLVQSGAEVKKPGESLRISCKGS) are framework-1. An Ig-like domain is found at 20-117 (EVQLVQSGAE…SDTAMYYCAR (98 aa)). Cysteines 41 and 115 form a disulfide. Residues 45 to 52 (GYSFTSYW) are complementarity-determining-1. A framework-2 region spans residues 53–69 (ISWVRQMPGKGLEWMGR). Positions 70 to 77 (IDPSDSYT) are complementarity-determining-2. The tract at residues 78-115 (NYSPSFQGHVTISADKSISTAYLQWSSLKASDTAMYYC) is framework-3. The segment at 116 to 117 (AR) is complementarity-determining-3.

In terms of assembly, immunoglobulins are composed of two identical heavy chains and two identical light chains; disulfide-linked.

The protein localises to the secreted. Its subcellular location is the cell membrane. V region of the variable domain of immunoglobulin heavy chains that participates in the antigen recognition. Immunoglobulins, also known as antibodies, are membrane-bound or secreted glycoproteins produced by B lymphocytes. In the recognition phase of humoral immunity, the membrane-bound immunoglobulins serve as receptors which, upon binding of a specific antigen, trigger the clonal expansion and differentiation of B lymphocytes into immunoglobulins-secreting plasma cells. Secreted immunoglobulins mediate the effector phase of humoral immunity, which results in the elimination of bound antigens. The antigen binding site is formed by the variable domain of one heavy chain, together with that of its associated light chain. Thus, each immunoglobulin has two antigen binding sites with remarkable affinity for a particular antigen. The variable domains are assembled by a process called V-(D)-J rearrangement and can then be subjected to somatic hypermutations which, after exposure to antigen and selection, allow affinity maturation for a particular antigen. The polypeptide is Immunoglobulin heavy variable 5-10-1 (Homo sapiens (Human)).